Consider the following 470-residue polypeptide: ATP synthase subunit beta (470 aa).

156–163 (GGAGVGKT) contributes to the ATP binding site.

It belongs to the ATPase alpha/beta chains family. F-type ATPases have 2 components, CF(1) - the catalytic core - and CF(0) - the membrane proton channel. CF(1) has five subunits: alpha(3), beta(3), gamma(1), delta(1), epsilon(1). CF(0) has three main subunits: a(1), b(2) and c(9-12). The alpha and beta chains form an alternating ring which encloses part of the gamma chain. CF(1) is attached to CF(0) by a central stalk formed by the gamma and epsilon chains, while a peripheral stalk is formed by the delta and b chains.

It is found in the cell inner membrane. It carries out the reaction ATP + H2O + 4 H(+)(in) = ADP + phosphate + 5 H(+)(out). Functionally, produces ATP from ADP in the presence of a proton gradient across the membrane. The catalytic sites are hosted primarily by the beta subunits. The polypeptide is ATP synthase subunit beta (Thermosipho africanus (strain TCF52B)).